Consider the following 243-residue polypeptide: Methylthioribulose-1-phosphate dehydratase (243 aa).

The segment at M1–P22 is disordered. Positions T7–L16 are enriched in polar residues. Residue C103 coordinates substrate. Zn(2+) is bound by residues H120 and H122. E149 functions as the Proton donor/acceptor in the catalytic mechanism. Residue H205 participates in Zn(2+) binding.

It belongs to the aldolase class II family. MtnB subfamily. It depends on Zn(2+) as a cofactor.

The protein resides in the cytoplasm. It catalyses the reaction 5-(methylsulfanyl)-D-ribulose 1-phosphate = 5-methylsulfanyl-2,3-dioxopentyl phosphate + H2O. It participates in amino-acid biosynthesis; L-methionine biosynthesis via salvage pathway; L-methionine from S-methyl-5-thio-alpha-D-ribose 1-phosphate: step 2/6. Functionally, catalyzes the dehydration of methylthioribulose-1-phosphate (MTRu-1-P) into 2,3-diketo-5-methylthiopentyl-1-phosphate (DK-MTP-1-P). The protein is Methylthioribulose-1-phosphate dehydratase of Penicillium rubens (strain ATCC 28089 / DSM 1075 / NRRL 1951 / Wisconsin 54-1255) (Penicillium chrysogenum).